The chain runs to 904 residues: Endoplasmic reticulum metallopeptidase 1 (904 aa).

Methionine 1 is subject to N-acetylmethionine. Topologically, residues 1-63 (MEWGSESAAV…PGGSGGASRG (63 aa)) are cytoplasmic. The disordered stretch occupies residues 1–65 (MEWGSESAAV…GSGGASRGAG (65 aa)). Over residues 55-65 (GGSGGASRGAG) the composition is skewed to gly residues. A helical membrane pass occupies residues 64-84 (AGTGLSEVRAALGLALYLIAL). Residues 85-399 (RTLVQLSLQQ…AASKYRHGNM (315 aa)) are Lumenal-facing. Residue asparagine 182 is glycosylated (N-linked (GlcNAc...) asparagine). Cysteines 204 and 222 form a disulfide. Residues histidine 205 and aspartate 217 each coordinate Zn(2+). Glutamate 251 serves as the catalytic Proton acceptor. Zn(2+)-binding residues include glutamate 252, glutamate 278, and histidine 354. Residues 400–420 (VFFDVLGLFVIAYPSRIGSII) form a helical membrane-spanning segment. Topologically, residues 421–457 (NYMVVMGVVLYLGKKFLQPKHKTGNYKKDFLCGLGIT) are cytoplasmic. The chain crosses the membrane as a helical span at residues 458-478 (LISWFTSLVTVLIIAVFISLI). At 479-489 (GQSLSWYNHFY) the chain is on the lumenal side. The helical transmembrane segment at 490-510 (VSVCLYGTATVAKIILIHTLA) threads the bilayer. The Cytoplasmic segment spans residues 511–519 (KRFYYMNAS). A helical membrane pass occupies residues 520–540 (AQYLGEVFFDISLFVHCCFLV). Position 541 (threonine 541) is a topological domain, lumenal. A helical membrane pass occupies residues 542–562 (LTYQGLCSAFISAVWVAFPLL). Residues 563 to 579 (TKLCVHKDFKQHGAQGK) are Cytoplasmic-facing. Residues 580–600 (FIAFYLLGMFIPYLYALYLIW) form a helical membrane-spanning segment. Topologically, residues 601–621 (AVFEMFTPILGRSGSEIPPDV) are lumenal. Residues 622 to 642 (VLASILAGCTMILSSYFINFI) traverse the membrane as a helical segment. At 643-651 (YLAKSTKKT) the chain is on the cytoplasmic side. Residues 652–672 (MLTLTLVCAITFLLVCSGTFF) form a helical membrane-spanning segment. Topologically, residues 673-904 (PYSSNPANPK…WVCTYDLFVF (232 aa)) are lumenal. A glycan (N-linked (GlcNAc...) asparagine) is linked at asparagine 730.

The protein belongs to the peptidase M28 family. Zn(2+) serves as cofactor.

The protein localises to the endoplasmic reticulum membrane. In terms of biological role, within the ovary, required for the organization of somatic cells and oocytes into discrete follicular structures. The polypeptide is Endoplasmic reticulum metallopeptidase 1 (Homo sapiens (Human)).